An 84-amino-acid chain; its full sequence is Cysteine-rich protamine (84 aa).

Disulfide bonds link Cys-16/Cys-24 and Cys-64/Cys-80.

Cross-linked by interchain disulfide bonds around the DNA-helix. As to expression, testis.

Its subcellular location is the nucleus. It localises to the chromosome. In terms of biological role, protamines substitute for histones in the chromatin of sperm during the haploid phase of spermatogenesis. They compact sperm DNA into a highly condensed, stable and inactive complex. This protamine condenses spermiogenic chromatin in a pattern which comprises fibers with a progressively larger diameter and lamellae that finally undergo definitive coalescence. The protein is Cysteine-rich protamine of Eledone cirrhosa (Curled octopus).